We begin with the raw amino-acid sequence, 453 residues long: MSFDLIIKNGTVILENEARVIDIAVQGGKIAAIGENLEEAKNVLDATGLIVSPGMVDAHTHISEPGRTHWEGYETGTRAAAKGGITTMIEMPLNQLPATVDRETIELKFDAAKGKLTIDAAQLGGLVSYNLDRLHELDEVGVVGFKCFVATCGDRGIDNDFRDVNDWQFYKGAQKLGEMDQTVLVHCENALICDELGEEAKREGRVTAHDYVASRPVFTEVEAIRRVLYLAKAAGCRLHVCHISSPEGVEEVTRARQEGQDVTCESCPHYFVLDTDQFEEIGTLAKCSPPIRDQENQKGMWEKLFNGEIDCLVSDHSPCPPEMKAGNIMQAWGGIAGLQNCMDVMFDEAVQKRGMSLPMFGKLMATNAADIFGLKHKGRIAPGKDADLVFIQPDSSYVLKNEDLEYRHKVSPYVGRTIGARITKTILRGDVIYDIEHGFPVPPKGQFILKHQQ.

Zn(2+)-binding residues include His59, His61, Lys146, His186, His242, and Asp315. The residue at position 146 (Lys146) is an N6-carboxylysine.

It belongs to the metallo-dependent hydrolases superfamily. Allantoinase family. Homotetramer. Zn(2+) serves as cofactor. Carboxylation allows a single lysine to coordinate two zinc ions.

It catalyses the reaction (S)-allantoin + H2O = allantoate + H(+). It participates in nitrogen metabolism; (S)-allantoin degradation; allantoate from (S)-allantoin: step 1/1. Functionally, catalyzes the conversion of allantoin (5-ureidohydantoin) to allantoic acid by hydrolytic cleavage of the five-member hydantoin ring. This Salmonella choleraesuis (strain SC-B67) protein is Allantoinase.